Reading from the N-terminus, the 401-residue chain is Probable trafficking protein particle complex subunit 13 homolog (401 aa).

The protein belongs to the TRAPPC13 family.

This is Probable trafficking protein particle complex subunit 13 homolog from Caenorhabditis elegans.